We begin with the raw amino-acid sequence, 267 residues long: Dihydropteroate synthase (267 aa).

Residues 1-251 (MTKTKIMGIL…NVELNAKLAK (251 aa)) form the Pterin-binding domain. Asparagine 11 is a Mg(2+) binding site. (7,8-dihydropterin-6-yl)methyl diphosphate-binding positions include threonine 51, aspartate 84, asparagine 103, aspartate 167, lysine 203, and 239 to 241 (RVH).

Belongs to the DHPS family. Homodimer. Mg(2+) is required as a cofactor.

It carries out the reaction (7,8-dihydropterin-6-yl)methyl diphosphate + 4-aminobenzoate = 7,8-dihydropteroate + diphosphate. It participates in cofactor biosynthesis; tetrahydrofolate biosynthesis; 7,8-dihydrofolate from 2-amino-4-hydroxy-6-hydroxymethyl-7,8-dihydropteridine diphosphate and 4-aminobenzoate: step 1/2. In terms of biological role, catalyzes the condensation of para-aminobenzoate (pABA) with 6-hydroxymethyl-7,8-dihydropterin diphosphate (DHPt-PP) to form 7,8-dihydropteroate (H2Pte), the immediate precursor of folate derivatives. The chain is Dihydropteroate synthase (folP) from Staphylococcus aureus (strain MRSA252).